A 269-amino-acid chain; its full sequence is Phosphatidylglycerol--prolipoprotein diacylglyceryl transferase (269 aa).

The next 3 helical transmembrane spans lie at 21–41, 54–74, and 88–108; these read WYGI…VLEG, LLLY…VVFE, and IWDG…VILI. Arginine 136 is a binding site for a 1,2-diacyl-sn-glycero-3-phospho-(1'-sn-glycerol). The next 2 membrane-spanning stretches (helical) occupy residues 206-226 and 236-256; these read GEVV…IEGM and LRVS…AIFY.

This sequence belongs to the Lgt family.

The protein resides in the cell membrane. The enzyme catalyses L-cysteinyl-[prolipoprotein] + a 1,2-diacyl-sn-glycero-3-phospho-(1'-sn-glycerol) = an S-1,2-diacyl-sn-glyceryl-L-cysteinyl-[prolipoprotein] + sn-glycerol 1-phosphate + H(+). It functions in the pathway protein modification; lipoprotein biosynthesis (diacylglyceryl transfer). Functionally, catalyzes the transfer of the diacylglyceryl group from phosphatidylglycerol to the sulfhydryl group of the N-terminal cysteine of a prolipoprotein, the first step in the formation of mature lipoproteins. The sequence is that of Phosphatidylglycerol--prolipoprotein diacylglyceryl transferase from Ligilactobacillus salivarius (strain UCC118) (Lactobacillus salivarius).